We begin with the raw amino-acid sequence, 712 residues long: Polyphosphate kinase (712 aa).

Asn49 contributes to the ATP binding site. Positions 398 and 428 each coordinate Mg(2+). His458 serves as the catalytic Phosphohistidine intermediate. The ATP site is built by Tyr491, Arg587, and His615.

Belongs to the polyphosphate kinase 1 (PPK1) family. Requires Mg(2+) as cofactor. In terms of processing, an intermediate of this reaction is the autophosphorylated ppk in which a phosphate is covalently linked to a histidine residue through a N-P bond.

It carries out the reaction [phosphate](n) + ATP = [phosphate](n+1) + ADP. Functionally, catalyzes the reversible transfer of the terminal phosphate of ATP to form a long-chain polyphosphate (polyP). This chain is Polyphosphate kinase, found in Parasynechococcus marenigrum (strain WH8102).